The chain runs to 319 residues: L-lactate dehydrogenase (319 aa).

NAD(+)-binding positions include Val17, Asp38, Lys43, Tyr69, and 83 to 84 (GA). Residues Gln86, Arg92, and 124–127 (NPVD) each bind substrate. NAD(+)-binding positions include 122-124 (ATN) and Ser147. Position 152 to 155 (152 to 155 (DTAR)) interacts with substrate. Residues Arg157 and His172 each coordinate beta-D-fructose 1,6-bisphosphate. Catalysis depends on His179, which acts as the Proton acceptor. Position 224 is a phosphotyrosine (Tyr224). Thr233 lines the substrate pocket.

Belongs to the LDH/MDH superfamily. LDH family. As to quaternary structure, homotetramer.

It is found in the cytoplasm. The catalysed reaction is (S)-lactate + NAD(+) = pyruvate + NADH + H(+). The protein operates within fermentation; pyruvate fermentation to lactate; (S)-lactate from pyruvate: step 1/1. With respect to regulation, allosterically activated by fructose 1,6-bisphosphate (FBP). Catalyzes the conversion of lactate to pyruvate. This chain is L-lactate dehydrogenase, found in Bacillus licheniformis (strain ATCC 14580 / DSM 13 / JCM 2505 / CCUG 7422 / NBRC 12200 / NCIMB 9375 / NCTC 10341 / NRRL NRS-1264 / Gibson 46).